The sequence spans 238 residues: Ethylene-responsive transcription factor ERN3 (238 aa).

The AP2/ERF DNA-binding region spans lysine 24–serine 81.

Belongs to the AP2/ERF transcription factor family. ERF subfamily. Expressed in roots, root hairs and leaves.

The protein resides in the nucleus. Functionally, transcription factor involved in symbiotic nodule signaling in response to rhizobial Nod factors (NFs). Binds to the GCC box (NF-responsive box) of ENOD11 promoter. May act as transcriptional repressor of NF-responsive box-containing target gene promoters in root hairs. The polypeptide is Ethylene-responsive transcription factor ERN3 (Medicago truncatula (Barrel medic)).